Here is a 122-residue protein sequence, read N- to C-terminus: Large ribosomal subunit protein uL14 (122 aa).

Belongs to the universal ribosomal protein uL14 family. Part of the 50S ribosomal subunit. Forms a cluster with proteins L3 and L19. In the 70S ribosome, L14 and L19 interact and together make contacts with the 16S rRNA in bridges B5 and B8.

Binds to 23S rRNA. Forms part of two intersubunit bridges in the 70S ribosome. In Bacillus pumilus (strain SAFR-032), this protein is Large ribosomal subunit protein uL14.